Reading from the N-terminus, the 280-residue chain is Putative pyruvate, phosphate dikinase regulatory protein (280 aa).

Residue 152 to 159 (GISRTSKT) participates in ADP binding.

This sequence belongs to the pyruvate, phosphate/water dikinase regulatory protein family. PDRP subfamily.

It carries out the reaction N(tele)-phospho-L-histidyl/L-threonyl-[pyruvate, phosphate dikinase] + ADP = N(tele)-phospho-L-histidyl/O-phospho-L-threonyl-[pyruvate, phosphate dikinase] + AMP + H(+). The enzyme catalyses N(tele)-phospho-L-histidyl/O-phospho-L-threonyl-[pyruvate, phosphate dikinase] + phosphate + H(+) = N(tele)-phospho-L-histidyl/L-threonyl-[pyruvate, phosphate dikinase] + diphosphate. In terms of biological role, bifunctional serine/threonine kinase and phosphorylase involved in the regulation of the pyruvate, phosphate dikinase (PPDK) by catalyzing its phosphorylation/dephosphorylation. The chain is Putative pyruvate, phosphate dikinase regulatory protein from Clostridioides difficile (strain 630) (Peptoclostridium difficile).